The sequence spans 172 residues: Peptide deformylase (172 aa).

Fe cation contacts are provided by cysteine 94 and histidine 136. Glutamate 137 is an active-site residue. A Fe cation-binding site is contributed by histidine 140.

The protein belongs to the polypeptide deformylase family. Fe(2+) serves as cofactor.

The catalysed reaction is N-terminal N-formyl-L-methionyl-[peptide] + H2O = N-terminal L-methionyl-[peptide] + formate. Its function is as follows. Removes the formyl group from the N-terminal Met of newly synthesized proteins. Requires at least a dipeptide for an efficient rate of reaction. N-terminal L-methionine is a prerequisite for activity but the enzyme has broad specificity at other positions. In Pelagibacter ubique (strain HTCC1062), this protein is Peptide deformylase.